We begin with the raw amino-acid sequence, 553 residues long: ATP synthase F(1) complex subunit alpha, mitochondrial (553 aa).

Residues 1 to 43 (MLSVRVAAAVARALPRRAGLVSKNALGSSFVAARNLHASNTRL) constitute a mitochondrion transit peptide. A phosphoserine mark is found at S53 and S65. At S76 the chain carries Phosphoserine; alternate. The O-linked (GlcNAc) serine; alternate glycan is linked to S76. At S106 the chain carries Phosphoserine. Residues K123, K126, and K132 each carry the N6-acetyllysine modification. Phosphothreonine is present on T134. K161 is modified (N6-acetyllysine; alternate). At K161 the chain carries N6-succinyllysine; alternate. A Phosphoserine modification is found at S166. K167 carries the N6-acetyllysine; alternate modification. An N6-succinyllysine; alternate modification is found at K167. The residue at position 184 (S184) is a Phosphoserine. Residue R204 is modified to Omega-N-methylarginine. Q215, G217, K218, T219, and S220 together coordinate ATP. Mg(2+) is bound at residue T219. N6-acetyllysine; alternate is present on residues K230 and K239. 2 positions are modified to N6-succinyllysine; alternate: K230 and K239. The residue at position 240 (K240) is an N6-acetyllysine. K261 and K305 each carry N6-acetyllysine; alternate. An N6-succinyllysine; alternate mark is found at K261 and K305. A Mg(2+)-binding site is contributed by D312. N6-acetyllysine; alternate is present on K427. Position 427 is an N6-succinyllysine; alternate (K427). K434 is subject to N6-acetyllysine. Positions 473 and 475 each coordinate ATP. Residues K498, K506, K531, and K539 each carry the N6-acetyllysine; alternate modification. K498, K506, K531, and K539 each carry N6-succinyllysine; alternate. An N6-acetyllysine modification is found at K541.

It belongs to the ATPase alpha/beta chains family. As to quaternary structure, homotrimer. Component of the ATP synthase complex composed at least of ATP5F1A/subunit alpha, ATP5F1B/subunit beta, ATP5MC1/subunit c (homooctomer), MT-ATP6/subunit a, MT-ATP8/subunit 8, ATP5ME/subunit e, ATP5MF/subunit f, ATP5MG/subunit g, ATP5MK/subunit k, ATP5MJ/subunit j, ATP5F1C/subunit gamma, ATP5F1D/subunit delta, ATP5F1E/subunit epsilon, ATP5PF/subunit F6, ATP5PB/subunit b, ATP5PD/subunit d, ATP5PO/subunit OSCP. ATP synthase complex consists of a soluble F(1) head domain (subunits alpha(3) and beta(3)) - the catalytic core - and a membrane F(0) domain - the membrane proton channel (subunits c, a, 8, e, f, g, k and j). These two domains are linked by a central stalk (subunits gamma, delta, and epsilon) rotating inside the F1 region and a stationary peripheral stalk (subunits F6, b, d, and OSCP). Interacts with ATPAF2. Interacts with HRG; the interaction occurs on the surface of T-cells and alters the cell morphology when associated with concanavalin (in vitro). Interacts with PLG (angiostatin peptide); the interaction inhibits most of the angiogenic properties of angiostatin. Interacts with BLOC1S1. Interacts with BCL2L1 isoform BCL-X(L); the interaction mediates the association of BCL2L1 isoform BCL-X(L) with the mitochondrial membrane F(1)F(0) ATP synthase and enhances neurons metabolic efficiency. Interacts with CLN5 and PPT1. Interacts with S100A1; this interaction increases F1-ATPase activity. Interacts with ABCB7; this interaction allows the regulation of cellular iron homeostasis and cellular reactive oxygen species (ROS) levels in cardiomyocytes. Acetylated on lysine residues. BLOC1S1 is required for acetylation. In terms of tissue distribution, expressed in heart (at protein level).

The protein resides in the mitochondrion. The protein localises to the mitochondrion inner membrane. Its subcellular location is the cell membrane. In terms of biological role, subunit alpha, of the mitochondrial membrane ATP synthase complex (F(1)F(0) ATP synthase or Complex V) that produces ATP from ADP in the presence of a proton gradient across the membrane which is generated by electron transport complexes of the respiratory chain. ATP synthase complex consist of a soluble F(1) head domain - the catalytic core - and a membrane F(1) domain - the membrane proton channel. These two domains are linked by a central stalk rotating inside the F(1) region and a stationary peripheral stalk. During catalysis, ATP synthesis in the catalytic domain of F(1) is coupled via a rotary mechanism of the central stalk subunits to proton translocation. In vivo, can only synthesize ATP although its ATP hydrolase activity can be activated artificially in vitro. With the catalytic subunit beta (ATP5F1B), forms the catalytic core in the F(1) domain. Subunit alpha does not bear the catalytic high-affinity ATP-binding sites. The polypeptide is ATP synthase F(1) complex subunit alpha, mitochondrial (Sus scrofa (Pig)).